We begin with the raw amino-acid sequence, 334 residues long: Anthranilate phosphoribosyltransferase (334 aa).

5-phospho-alpha-D-ribose 1-diphosphate is bound by residues G81, 84–85 (GD), T89, 91–94 (NIST), 109–117 (KHGNRSVSS), and A121. G81 lines the anthranilate pocket. Mg(2+) is bound at residue S93. Anthranilate is bound at residue N112. R167 provides a ligand contact to anthranilate. Mg(2+) contacts are provided by D225 and E226.

It belongs to the anthranilate phosphoribosyltransferase family. Homodimer. Requires Mg(2+) as cofactor.

The catalysed reaction is N-(5-phospho-beta-D-ribosyl)anthranilate + diphosphate = 5-phospho-alpha-D-ribose 1-diphosphate + anthranilate. It participates in amino-acid biosynthesis; L-tryptophan biosynthesis; L-tryptophan from chorismate: step 2/5. Functionally, catalyzes the transfer of the phosphoribosyl group of 5-phosphorylribose-1-pyrophosphate (PRPP) to anthranilate to yield N-(5'-phosphoribosyl)-anthranilate (PRA). The protein is Anthranilate phosphoribosyltransferase of Histophilus somni (strain 2336) (Haemophilus somnus).